We begin with the raw amino-acid sequence, 179 residues long: Zinc finger HIT domain-containing protein 3 (179 aa).

Residues C11, C14, C22, C25, C30, C34, H38, and C49 each contribute to the Zn(2+) site. An HIT-type zinc finger spans residues 11 to 49 (CVVCLEKPKYRCPACRVPYCSLPCFRKHKAPPLQQLPVC). At S104 the chain carries Phosphoserine.

As to quaternary structure, thyroid receptor interacting proteins (TRIPs) specifically interact with the ligand binding domain of the thyroid receptor (TR). Requires the presence of thyroid hormone for its interaction. Interacts with NUFIP1. Interacts (via HIT-type zinc finger) with the RUVBL1/RUVBL2 complex in the presence of ADP.

It localises to the cytoplasm. The protein localises to the nucleus. The polypeptide is Zinc finger HIT domain-containing protein 3 (ZNHIT3) (Bos taurus (Bovine)).